A 191-amino-acid chain; its full sequence is NADH-quinone oxidoreductase subunit B 2 (191 aa).

Cys-69, Cys-70, Cys-134, and Cys-164 together coordinate [4Fe-4S] cluster.

Belongs to the complex I 20 kDa subunit family. As to quaternary structure, NDH-1 is composed of 14 different subunits. Subunits NuoB, C, D, E, F, and G constitute the peripheral sector of the complex. Requires [4Fe-4S] cluster as cofactor.

Its subcellular location is the cell inner membrane. The catalysed reaction is a quinone + NADH + 5 H(+)(in) = a quinol + NAD(+) + 4 H(+)(out). Its function is as follows. NDH-1 shuttles electrons from NADH, via FMN and iron-sulfur (Fe-S) centers, to quinones in the respiratory chain. Couples the redox reaction to proton translocation (for every two electrons transferred, four hydrogen ions are translocated across the cytoplasmic membrane), and thus conserves the redox energy in a proton gradient. The chain is NADH-quinone oxidoreductase subunit B 2 from Gluconacetobacter diazotrophicus (strain ATCC 49037 / DSM 5601 / CCUG 37298 / CIP 103539 / LMG 7603 / PAl5).